A 217-amino-acid chain; its full sequence is Large ribosomal subunit protein uL4 (217 aa).

A disordered region spans residues 46–103 (KRQGTHATKTRGMVSGGGRKPFRQKGTGRARQGSIRAPHFTGGGTVHGPQPRDYSQRT).

It belongs to the universal ribosomal protein uL4 family. In terms of assembly, part of the 50S ribosomal subunit.

Its function is as follows. One of the primary rRNA binding proteins, this protein initially binds near the 5'-end of the 23S rRNA. It is important during the early stages of 50S assembly. It makes multiple contacts with different domains of the 23S rRNA in the assembled 50S subunit and ribosome. Forms part of the polypeptide exit tunnel. In Corynebacterium jeikeium (strain K411), this protein is Large ribosomal subunit protein uL4.